Reading from the N-terminus, the 732-residue chain is Guanylate cyclase soluble subunit alpha-2 (732 aa).

Positions M1 to A58 are disordered. Low complexity predominate over residues S49–A58. Residues T521–E648 form the Guanylate cyclase domain.

It belongs to the adenylyl cyclase class-4/guanylyl cyclase family. In terms of assembly, heterodimer of an alpha and a beta chain. As to expression, isoform 1 is expressed in fetal brain, liver, colon, endothelium and testis. Isoform 2 is expressed only in liver, colon and endothelium.

Its subcellular location is the cytoplasm. The catalysed reaction is GTP = 3',5'-cyclic GMP + diphosphate. Its activity is regulated as follows. Activated by nitric oxide in the presence of magnesium or manganese ions. In terms of biological role, has guanylyl cyclase on binding to the beta-1 subunit. Isoform 2 acts as a negative regulator of guanylyl cyclase activity as it forms non-functional heterodimers with the beta subunits. In Homo sapiens (Human), this protein is Guanylate cyclase soluble subunit alpha-2 (GUCY1A2).